A 305-amino-acid polypeptide reads, in one-letter code: Recombination-associated protein RdgC (305 aa).

Belongs to the RdgC family.

The protein resides in the cytoplasm. Its subcellular location is the nucleoid. May be involved in recombination. The chain is Recombination-associated protein RdgC from Sodalis glossinidius (strain morsitans).